Reading from the N-terminus, the 821-residue chain is Serine/threonine-protein kinase RAD53 (821 aa).

Phosphoserine is present on S24. Positions 66-116 (WTFGRNPACDYHLGNISRLSNKHFQILLGEDGNLLLNDISTNGTWLNGQKV) constitute an FHA 1 domain. Phosphoserine is present on S175. One can recognise a Protein kinase domain in the interval 198 to 466 (SIIDEVVGQG…AAKALNHPWI (269 aa)). ATP contacts are provided by residues 204-212 (VGQGAFATV) and K227. Residue D319 is the Proton acceptor of the active site. Residues S547 and S560 each carry the phosphoserine modification. The FHA 2 domain occupies 601–664 (FFIGRSEDCN…NVSYLNNNRM (64 aa)). Positions 735–770 (AAQRANQPSASSSSMSAKKPPVSDTNNNGNNSVLND) are disordered. Residues 742–770 (PSASSSSMSAKKPPVSDTNNNGNNSVLND) are compositionally biased toward low complexity. Residues S774 and S793 each carry the phosphoserine modification. Residues 791-821 (SLSQSQIDPSKKVKRAKLDQTSKGPENLQFS) form a disordered region. Residues 809–821 (DQTSKGPENLQFS) are compositionally biased toward polar residues.

The protein belongs to the protein kinase superfamily. CAMK Ser/Thr protein kinase family. CHEK2 subfamily. In terms of assembly, interacts (via domain FHA 1) with PTC2 (when phosphorylated); the interaction is direct and serves to regulate DNA damage checkpoint signaling. Interacts with PIN4. In terms of processing, autophosphorylated. Phosphorylated in response to DNA double-strand breaks; dephosphorylation is mediated by PTC2 and PTC3.

It localises to the nucleus. The enzyme catalyses L-seryl-[protein] + ATP = O-phospho-L-seryl-[protein] + ADP + H(+). It catalyses the reaction L-threonyl-[protein] + ATP = O-phospho-L-threonyl-[protein] + ADP + H(+). It carries out the reaction L-tyrosyl-[protein] + ATP = O-phospho-L-tyrosyl-[protein] + ADP + H(+). Inactivated by dephosphorylation via recruitment of PTC2. Functionally, controls S-phase checkpoint as well as G1 and G2 DNA damage checkpoints. Phosphorylates proteins on serine, threonine, and tyrosine. Prevents entry into anaphase and mitotic exit after DNA damage via regulation of the Polo kinase CDC5. Seems to be involved in the phosphorylation of RPH1. The protein is Serine/threonine-protein kinase RAD53 (RAD53) of Saccharomyces cerevisiae (strain ATCC 204508 / S288c) (Baker's yeast).